The sequence spans 756 residues: Ribonucleoside-diphosphate reductase subunit alpha (756 aa).

Residues 5–95 (LMVTKRDGTQ…IFHLRKKAYG (91 aa)) enclose the ATP-cone domain. ATP-binding positions include Lys-9, 15–21 (EQINLDK), Thr-55, and Lys-91. Thr-209 lines the GDP pocket. A disulfide bond links Cys-225 and Cys-462. DTTP-binding positions include 232–234 (DSL), Arg-262, and Arg-269. Asn-437 is a GDP binding site. The Proton acceptor role is filled by Asn-437. Cys-439 functions as the Cysteine radical intermediate in the catalytic mechanism. Residues Glu-441 and 623–625 (ETS) each bind GDP. Residue Glu-441 is the Proton acceptor of the active site.

This sequence belongs to the ribonucleoside diphosphate reductase large chain family. Tetramer of two alpha and two beta subunits.

The catalysed reaction is a 2'-deoxyribonucleoside 5'-diphosphate + [thioredoxin]-disulfide + H2O = a ribonucleoside 5'-diphosphate + [thioredoxin]-dithiol. Under complex allosteric control mediated by deoxynucleoside triphosphates and ATP binding to separate specificity and activation sites on the alpha subunit. The type of nucleotide bound at the specificity site determines substrate preference. It seems probable that ATP makes the enzyme reduce CDP and UDP, dGTP favors ADP reduction and dTTP favors GDP reduction. Stimulated by ATP and inhibited by dATP binding to the activity site. Functionally, provides the precursors necessary for DNA synthesis. Catalyzes the biosynthesis of deoxyribonucleotides from the corresponding ribonucleotides. The sequence is that of Ribonucleoside-diphosphate reductase subunit alpha (nrdA) from Haemophilus influenzae (strain ATCC 51907 / DSM 11121 / KW20 / Rd).